The following is a 217-amino-acid chain: 3,4-dihydroxy-2-butanone 4-phosphate synthase (217 aa).

D-ribulose 5-phosphate-binding positions include 37–38 (RE), aspartate 42, 150–154 (RRGHT), and glutamate 174. Glutamate 38 contacts Mg(2+). Position 153 (histidine 153) interacts with Mg(2+).

The protein belongs to the DHBP synthase family. Homodimer. It depends on Mg(2+) as a cofactor. Mn(2+) serves as cofactor.

It carries out the reaction D-ribulose 5-phosphate = (2S)-2-hydroxy-3-oxobutyl phosphate + formate + H(+). It participates in cofactor biosynthesis; riboflavin biosynthesis; 2-hydroxy-3-oxobutyl phosphate from D-ribulose 5-phosphate: step 1/1. Functionally, catalyzes the conversion of D-ribulose 5-phosphate to formate and 3,4-dihydroxy-2-butanone 4-phosphate. This Yersinia pseudotuberculosis serotype O:1b (strain IP 31758) protein is 3,4-dihydroxy-2-butanone 4-phosphate synthase.